The primary structure comprises 123 residues: Small ribosomal subunit protein uS12 (123 aa).

D89 bears the 3-methylthioaspartic acid mark.

It belongs to the universal ribosomal protein uS12 family. As to quaternary structure, part of the 30S ribosomal subunit. Contacts proteins S8 and S17. May interact with IF1 in the 30S initiation complex.

With S4 and S5 plays an important role in translational accuracy. Functionally, interacts with and stabilizes bases of the 16S rRNA that are involved in tRNA selection in the A site and with the mRNA backbone. Located at the interface of the 30S and 50S subunits, it traverses the body of the 30S subunit contacting proteins on the other side and probably holding the rRNA structure together. The combined cluster of proteins S8, S12 and S17 appears to hold together the shoulder and platform of the 30S subunit. This chain is Small ribosomal subunit protein uS12, found in Brucella abortus (strain S19).